Here is a 427-residue protein sequence, read N- to C-terminus: UDP-N-acetylglucosamine 1-carboxyvinyltransferase 2 (427 aa).

Residue lysine 19–asparagine 20 coordinates phosphoenolpyruvate. Arginine 91 serves as a coordination point for UDP-N-acetyl-alpha-D-glucosamine. The Proton donor role is filled by cysteine 115. At cysteine 115 the chain carries 2-(S-cysteinyl)pyruvic acid O-phosphothioketal. Residues aspartate 307 and valine 329 each coordinate UDP-N-acetyl-alpha-D-glucosamine.

The protein belongs to the EPSP synthase family. MurA subfamily.

It localises to the cytoplasm. It catalyses the reaction phosphoenolpyruvate + UDP-N-acetyl-alpha-D-glucosamine = UDP-N-acetyl-3-O-(1-carboxyvinyl)-alpha-D-glucosamine + phosphate. It participates in cell wall biogenesis; peptidoglycan biosynthesis. In terms of biological role, cell wall formation. Adds enolpyruvyl to UDP-N-acetylglucosamine. The chain is UDP-N-acetylglucosamine 1-carboxyvinyltransferase 2 from Prochlorococcus marinus (strain SARG / CCMP1375 / SS120).